The chain runs to 270 residues: Putative serine acetyltransferase (270 aa).

It belongs to the transferase hexapeptide repeat family.

Its subcellular location is the cytoplasm. The protein localises to the nucleus. It catalyses the reaction L-serine + acetyl-CoA = O-acetyl-L-serine + CoA. Its pathway is amino-acid biosynthesis; L-cysteine biosynthesis; L-cysteine from L-serine: step 1/2. This chain is Putative serine acetyltransferase, found in Schizosaccharomyces pombe (strain 972 / ATCC 24843) (Fission yeast).